The following is a 408-amino-acid chain: Acetylornithine aminotransferase (408 aa).

Residues Gly-107–Thr-108 and Phe-141 contribute to the pyridoxal 5'-phosphate site. Arg-144 is a N(2)-acetyl-L-ornithine binding site. Residue Asp-227–Gln-230 coordinates pyridoxal 5'-phosphate. Lys-256 is modified (N6-(pyridoxal phosphate)lysine). Residue Thr-284 participates in N(2)-acetyl-L-ornithine binding. Pyridoxal 5'-phosphate is bound at residue Thr-285.

It belongs to the class-III pyridoxal-phosphate-dependent aminotransferase family. ArgD subfamily. Homodimer. The cofactor is pyridoxal 5'-phosphate.

The protein resides in the cytoplasm. It catalyses the reaction N(2)-acetyl-L-ornithine + 2-oxoglutarate = N-acetyl-L-glutamate 5-semialdehyde + L-glutamate. The protein operates within amino-acid biosynthesis; L-arginine biosynthesis; N(2)-acetyl-L-ornithine from L-glutamate: step 4/4. This Xanthomonas axonopodis pv. citri (strain 306) protein is Acetylornithine aminotransferase.